We begin with the raw amino-acid sequence, 268 residues long: Indole-3-glycerol phosphate synthase (268 aa).

This sequence belongs to the TrpC family.

The catalysed reaction is 1-(2-carboxyphenylamino)-1-deoxy-D-ribulose 5-phosphate + H(+) = (1S,2R)-1-C-(indol-3-yl)glycerol 3-phosphate + CO2 + H2O. The protein operates within amino-acid biosynthesis; L-tryptophan biosynthesis; L-tryptophan from chorismate: step 4/5. The sequence is that of Indole-3-glycerol phosphate synthase from Parafrankia sp. (strain EAN1pec).